Here is a 328-residue protein sequence, read N- to C-terminus: Ubiquitin-conjugating enzyme E2 Z (328 aa).

Residues 71–225 form the UBC core domain; sequence QCILRIKRDI…IRHETMRVAV (155 aa). The Glycyl thioester intermediate role is filled by C160. Residues 295 to 328 are disordered; it reads RLREKCPPEDNDGDSDSDTSSSGTDPDSQGSSQP. Residues 312-328 show a composition bias toward low complexity; that stretch reads DTSSSGTDPDSQGSSQP.

Belongs to the ubiquitin-conjugating enzyme family.

The protein localises to the cytoplasm. The protein resides in the nucleus. The enzyme catalyses S-ubiquitinyl-[E1 ubiquitin-activating enzyme]-L-cysteine + [E2 ubiquitin-conjugating enzyme]-L-cysteine = [E1 ubiquitin-activating enzyme]-L-cysteine + S-ubiquitinyl-[E2 ubiquitin-conjugating enzyme]-L-cysteine.. Its pathway is protein modification; protein ubiquitination. Its function is as follows. Catalyzes the covalent attachment of ubiquitin to other proteins. May be involved in apoptosis regulation. This chain is Ubiquitin-conjugating enzyme E2 Z (ube2z), found in Danio rerio (Zebrafish).